A 490-amino-acid chain; its full sequence is ATP synthase subunit beta, chloroplastic (490 aa).

Position 170-177 (170-177) interacts with ATP; it reads GGAGVGKT.

This sequence belongs to the ATPase alpha/beta chains family. In terms of assembly, F-type ATPases have 2 components, CF(1) - the catalytic core - and CF(0) - the membrane proton channel. CF(1) has five subunits: alpha(3), beta(3), gamma(1), delta(1), epsilon(1). CF(0) has four main subunits: a(1), b(1), b'(1) and c(9-12).

The protein resides in the plastid. It localises to the chloroplast thylakoid membrane. It carries out the reaction ATP + H2O + 4 H(+)(in) = ADP + phosphate + 5 H(+)(out). Functionally, produces ATP from ADP in the presence of a proton gradient across the membrane. The catalytic sites are hosted primarily by the beta subunits. The chain is ATP synthase subunit beta, chloroplastic from Ipomoea wrightii (Wright's morning glory).